A 352-amino-acid chain; its full sequence is C-C chemokine receptor type 5 (352 aa).

The Extracellular portion of the chain corresponds to 1 to 30 (MDYQVSSPTYDIDYYTSGPCQKINVKQIAA). A Sulfotyrosine modification is found at Y3. 2 O-linked (GalNAc...) serine glycosylation sites follow: S6 and S7. Sulfotyrosine is present on residues Y10, Y14, and Y15. Disulfide bonds link C20/C269 and C101/C178. The chain crosses the membrane as a helical span at residues 31-58 (RLLPPLYSLVFIFGFVGNMLVILILINC). The Cytoplasmic portion of the chain corresponds to 59–68 (KRLKSMTDIY). A helical transmembrane segment spans residues 69–89 (LLNLAISDLFFLLTVPFWAHY). Residues 90–102 (AAAQWDFGNTMCQ) are Extracellular-facing. Residues 103–124 (LLTGLYFIGFFSGIFFIILLTI) traverse the membrane as a helical segment. At 125–141 (DRYLAIVHAVFALKART) the chain is on the cytoplasmic side. A helical membrane pass occupies residues 142 to 166 (VTFGVVTSVITWVVAVFASLPGIIF). Over 167 to 198 (TRSQKEGLHYTCSSHFPYSQYQFWKNFQTLKI) the chain is Extracellular. A helical membrane pass occupies residues 199–218 (VILGLVLPLLVMVICYSGIL). Residues 219–235 (KTLLRCRNEKKRHRAVR) are Cytoplasmic-facing. Residues 236–260 (LIFTIMIVYFLFWAPYNIVLLLNTF) form a helical membrane-spanning segment. The Extracellular portion of the chain corresponds to 261 to 277 (QEFFGLNNCSSSNRLDQ). The chain crosses the membrane as a helical span at residues 278–301 (AMQVTETLGMTHCCINPIIYAFVG). The Cytoplasmic segment spans residues 302-352 (EKFRNYLLVFFQKHIAKHFCKCCSIFQQEAPERASSVYTRSTGEQEISVGL). Residues C321, C323, and C324 are each lipidated (S-palmitoyl cysteine). S336, S337, S342, and S349 each carry phosphoserine; by BARK1.

This sequence belongs to the G-protein coupled receptor 1 family. In terms of assembly, interacts with PRAF2. Efficient ligand binding to CCL3/MIP-1alpha and CCL4/MIP-1beta requires sulfation, O-glycosylation and sialic acid modifications. Glycosylation on Ser-6 is required for efficient binding of CCL4. Interacts with GRK2. Interacts with ARRB1 and ARRB2. Interacts with CNIH4. Interacts with S100A4; this interaction stimulates T-lymphocyte chemotaxis. In terms of processing, sulfated on at least 2 of the N-terminal tyrosines. Sulfation is required for efficient binding of the chemokines, CCL3 and CCL4. Palmitoylation in the C-terminal is important for cell surface expression. Post-translationally, phosphorylation on serine residues in the C-terminal is stimulated by binding CC chemokines especially by APO-RANTES. In terms of processing, O-glycosylated, but not N-glycosylated. Ser-6 appears to be the major site even if Ser-7 may be also O-glycosylated. Also sialylated glycans present which contribute to chemokine binding. Thr-16 and Ser-17 may also be glycosylated and, if so, with small moieties such as a T-antigen.

It localises to the cell membrane. Functionally, receptor for a number of inflammatory CC-chemokines including CCL3/MIP-1-alpha, CCL4/MIP-1-beta and RANTES and subsequently transduces a signal by increasing the intracellular calcium ion level. May play a role in the control of granulocytic lineage proliferation or differentiation. Participates in T-lymphocyte migration to the infection site by acting as a chemotactic receptor. The sequence is that of C-C chemokine receptor type 5 (CCR5) from Hylobates moloch (Silvery gibbon).